The sequence spans 380 residues: Flap endonuclease 1 (380 aa).

The interval 1 to 104 is N-domain; it reads MGIQGLAKLI…GELAKRSERR (104 aa). Residue Arg19 is modified to Symmetric dimethylarginine; by PRMT5. Asp34 lines the Mg(2+) pocket. Positions 47 and 70 each coordinate DNA. Lys80 carries the N6-acetyllysine modification. A Mg(2+)-binding site is contributed by Asp86. Arg100 and Arg104 each carry symmetric dimethylarginine; by PRMT5. The I-domain stretch occupies residues 122-253; it reads EVEKFTKRLV…KRAVDLIQKH (132 aa). 4 residues coordinate Mg(2+): Glu158, Glu160, Asp179, and Asp181. DNA is bound at residue Glu158. Ser187 carries the post-translational modification Phosphoserine; by CDK2. Arg192 is subject to Symmetric dimethylarginine; by PRMT5. At Ser197 the chain carries Phosphoserine. DNA-binding residues include Gly231 and Asp233. Mg(2+) is bound at residue Asp233. Residues Ser255, Ser293, and Ser335 each carry the phosphoserine modification. A disordered region spans residues 327-380; sequence RLSKSRQGSTQGRLDDFFKVTGSLSSAKRKEPEPKGSTKKKAKTGAAGKFKRGK. Thr336 carries the post-translational modification Phosphothreonine. The interval 336-344 is interaction with PCNA; that stretch reads TQGRLDDFF. Position 354 is an N6-acetyllysine (Lys354). Positions 363–380 are enriched in basic residues; it reads STKKKAKTGAAGKFKRGK. The residue at position 364 (Thr364) is a Phosphothreonine. N6-acetyllysine is present on residues Lys375, Lys377, and Lys380.

Belongs to the XPG/RAD2 endonuclease family. FEN1 subfamily. In terms of assembly, interacts with PCNA. Three molecules of FEN1 bind to one PCNA trimer with each molecule binding to one PCNA monomer. PCNA stimulates the nuclease activity without altering cleavage specificity. The C-terminal domain binds EP300; can bind simultaneously to both PCNA and EP300. Interacts with DDX11; this interaction is direct and increases flap endonuclease activity of FEN1. Interacts with WDR4; regulating its endonuclease activity. Interacts with POLB. Requires Mg(2+) as cofactor. Acetylated by EP300. Acetylation inhibits both endonuclease and exonuclease activity. Acetylation also reduces DNA-binding activity but does not affect interaction with PCNA or EP300. Post-translationally, phosphorylation upon DNA damage induces relocalization to the nuclear plasma. Phosphorylation at Ser-187 by CDK2 occurs during late S-phase and results in dissociation from PCNA. In terms of processing, methylation at Arg-192 by PRMT5 impedes Ser-187 phosphorylation and increases interaction with PCNA.

The protein resides in the nucleus. The protein localises to the nucleolus. Its subcellular location is the nucleoplasm. It localises to the mitochondrion. Structure-specific nuclease with 5'-flap endonuclease and 5'-3' exonuclease activities involved in DNA replication and repair. During DNA replication, cleaves the 5'-overhanging flap structure that is generated by displacement synthesis when DNA polymerase encounters the 5'-end of a downstream Okazaki fragment. It enters the flap from the 5'-end and then tracks to cleave the flap base, leaving a nick for ligation. Also involved in the long patch base excision repair (LP-BER) pathway, by cleaving within the apurinic/apyrimidinic (AP) site-terminated flap. Acts as a genome stabilization factor that prevents flaps from equilibrating into structures that lead to duplications and deletions. Also possesses 5'-3' exonuclease activity on nicked or gapped double-stranded DNA, and exhibits RNase H activity. Also involved in replication and repair of rDNA and in repairing mitochondrial DNA. The polypeptide is Flap endonuclease 1 (Homo sapiens (Human)).